The primary structure comprises 314 residues: MQTASFKNGTLKIGTRGSKLALAQAYLTRRLLQEAHGLPEDAIEILPMSTAGDRIQDRPLSEVGGKGLFTEEIEQALKDGRIDIAVHSTKDMPTALPEGLHLSVFLEREDPRDAFIGRSARRFMDLPQGATVGSSSLRRQALIRRLRPDIEVVMYRGNVDTRLRKLDAGEVDGTFLACAGLRRLGLADVITDVLDPSVFPPAPGQGAIGIESRIGDERIDVLLAPLAHRETQIALACERAFLGALDGSCRTPIAGLATVEGDRLSFRGMILTPDGRQAHEVTAEGVVSDAAALGTDAANRVRAMAGPHFFDGWQ.

Cys249 is modified (S-(dipyrrolylmethanemethyl)cysteine).

It belongs to the HMBS family. Monomer. Dipyrromethane serves as cofactor.

It catalyses the reaction 4 porphobilinogen + H2O = hydroxymethylbilane + 4 NH4(+). It functions in the pathway porphyrin-containing compound metabolism; protoporphyrin-IX biosynthesis; coproporphyrinogen-III from 5-aminolevulinate: step 2/4. Its function is as follows. Tetrapolymerization of the monopyrrole PBG into the hydroxymethylbilane pre-uroporphyrinogen in several discrete steps. This is Porphobilinogen deaminase from Brucella abortus (strain S19).